A 387-amino-acid polypeptide reads, in one-letter code: Phosphoglycerate kinase (387 aa).

Residues 21 to 23, Arg36, 59 to 62, Arg113, and Arg146 contribute to the substrate site; these read DLN and HLGR. ATP is bound by residues Lys197, Glu314, and 340-343; that span reads GGDT.

It belongs to the phosphoglycerate kinase family. Monomer.

Its subcellular location is the cytoplasm. The enzyme catalyses (2R)-3-phosphoglycerate + ATP = (2R)-3-phospho-glyceroyl phosphate + ADP. It functions in the pathway carbohydrate degradation; glycolysis; pyruvate from D-glyceraldehyde 3-phosphate: step 2/5. The sequence is that of Phosphoglycerate kinase from Yersinia enterocolitica serotype O:8 / biotype 1B (strain NCTC 13174 / 8081).